The sequence spans 101 residues: Urease subunit beta (101 aa).

Belongs to the urease beta subunit family. Heterotrimer of UreA (gamma), UreB (beta) and UreC (alpha) subunits. Three heterotrimers associate to form the active enzyme.

It localises to the cytoplasm. The enzyme catalyses urea + 2 H2O + H(+) = hydrogencarbonate + 2 NH4(+). Its pathway is nitrogen metabolism; urea degradation; CO(2) and NH(3) from urea (urease route): step 1/1. This is Urease subunit beta from Dechloromonas aromatica (strain RCB).